The following is a 156-amino-acid chain: Ribosomal RNA large subunit methyltransferase H (156 aa).

Residues Leu-73, Gly-104, and 123–128 each bind S-adenosyl-L-methionine; that span reads IGPLTL.

It belongs to the RNA methyltransferase RlmH family. As to quaternary structure, homodimer.

Its subcellular location is the cytoplasm. The catalysed reaction is pseudouridine(1915) in 23S rRNA + S-adenosyl-L-methionine = N(3)-methylpseudouridine(1915) in 23S rRNA + S-adenosyl-L-homocysteine + H(+). Its function is as follows. Specifically methylates the pseudouridine at position 1915 (m3Psi1915) in 23S rRNA. This chain is Ribosomal RNA large subunit methyltransferase H, found in Xanthomonas axonopodis pv. citri (strain 306).